Here is a 410-residue protein sequence, read N- to C-terminus: Imidazolonepropionase (410 aa).

Fe(3+) contacts are provided by His73 and His75. His73 and His75 together coordinate Zn(2+). Arg82, Tyr145, and His178 together coordinate 4-imidazolone-5-propanoate. Position 145 (Tyr145) interacts with N-formimidoyl-L-glutamate. Position 243 (His243) interacts with Fe(3+). His243 is a Zn(2+) binding site. Position 246 (Gln246) interacts with 4-imidazolone-5-propanoate. Fe(3+) is bound at residue Asp318. Asp318 is a Zn(2+) binding site. Asn320 and Gly322 together coordinate N-formimidoyl-L-glutamate. Ser323 serves as a coordination point for 4-imidazolone-5-propanoate.

This sequence belongs to the metallo-dependent hydrolases superfamily. HutI family. The cofactor is Zn(2+). It depends on Fe(3+) as a cofactor.

It localises to the cytoplasm. It carries out the reaction 4-imidazolone-5-propanoate + H2O = N-formimidoyl-L-glutamate. Its pathway is amino-acid degradation; L-histidine degradation into L-glutamate; N-formimidoyl-L-glutamate from L-histidine: step 3/3. Its function is as follows. Catalyzes the hydrolytic cleavage of the carbon-nitrogen bond in imidazolone-5-propanoate to yield N-formimidoyl-L-glutamate. It is the third step in the universal histidine degradation pathway. The protein is Imidazolonepropionase of Shewanella frigidimarina (strain NCIMB 400).